A 183-amino-acid chain; its full sequence is Ubiquitin carboxyl-terminal hydrolase 17-like protein 23 (183 aa).

A USP domain is found at 80–183 (AGLQNMGNTC…KACLPGHKQV (104 aa)).

It belongs to the peptidase C19 family. USP17 subfamily.

It localises to the nucleus. The protein resides in the endoplasmic reticulum. The sequence is that of Ubiquitin carboxyl-terminal hydrolase 17-like protein 23 (USP17L23) from Homo sapiens (Human).